Here is a 467-residue protein sequence, read N- to C-terminus: Xanthan biosynthesis protein XanB (467 aa).

Belongs to the mannose-6-phosphate isomerase type 2 family.

It catalyses the reaction D-mannose 6-phosphate = D-fructose 6-phosphate. The enzyme catalyses alpha-D-mannose 1-phosphate + GTP + H(+) = GDP-alpha-D-mannose + diphosphate. The protein operates within nucleotide-sugar biosynthesis; GDP-alpha-D-mannose biosynthesis; GDP-alpha-D-mannose from alpha-D-mannose 1-phosphate (GTP route): step 1/1. It functions in the pathway nucleotide-sugar biosynthesis; GDP-alpha-D-mannose biosynthesis; alpha-D-mannose 1-phosphate from D-fructose 6-phosphate: step 1/2. Involved in xanthan production. This Xanthomonas campestris pv. campestris (strain ATCC 33913 / DSM 3586 / NCPPB 528 / LMG 568 / P 25) protein is Xanthan biosynthesis protein XanB (xanB).